Consider the following 191-residue polypeptide: Phospholipase A2-delta (191 aa).

The first 25 residues, 1–25, serve as a signal peptide directing secretion; the sequence is MIRGGALTHVALGLTVFLLLAVVHS. Disulfide bonds link Cys29–Cys56, Cys33–Cys62, Cys38–Cys115, Cys49–Cys69, Cys68–Cys93, and Cys75–Cys86. Positions 48, 50, and 53 each coordinate Ca(2+). Residue His72 is part of the active site. Asp73 serves as a coordination point for Ca(2+). A disordered region spans residues 161 to 191; it reads KADTKDGLGTNQGPQTKDGSKVSVPMNPSPS.

It belongs to the phospholipase A2 family. Ca(2+) serves as cofactor. Specifically expressed in flowers but at a low level. Detected specifically in the pollen.

It is found in the secreted. Its subcellular location is the endoplasmic reticulum. It carries out the reaction a 1,2-diacyl-sn-glycero-3-phosphocholine + H2O = a 1-acyl-sn-glycero-3-phosphocholine + a fatty acid + H(+). PA2 catalyzes the calcium-dependent hydrolysis of the 2-acyl groups in 3-sn-phosphoglycerides. Releases lysophospholipids (LPLs) and free fatty acids (FFAs) from membrane phospholipids in response to hormones and other external stimuli. Plays a role in pollen development and germination and tube growth. This Arabidopsis thaliana (Mouse-ear cress) protein is Phospholipase A2-delta (PLA2-DELTA).